A 123-amino-acid chain; its full sequence is Fluoride-specific ion channel FluC (123 aa).

4 helical membrane passes run 5–25, 29–49, 65–85, and 94–114; these read LIIGIGGFIGAILRYVISGII, FGIPTGTFIVNLIGSFIVGFV, LIITGFCGALTTFSTFSYETF, and IKFLTNIFINVMGCLIMIYVG. Residues Gly72 and Thr75 each contribute to the Na(+) site.

It belongs to the fluoride channel Fluc/FEX (TC 1.A.43) family.

The protein localises to the cell membrane. It catalyses the reaction fluoride(in) = fluoride(out). Its activity is regulated as follows. Na(+) is not transported, but it plays an essential structural role and its presence is essential for fluoride channel function. In terms of biological role, fluoride-specific ion channel. Important for reducing fluoride concentration in the cell, thus reducing its toxicity. The chain is Fluoride-specific ion channel FluC from Methanococcus aeolicus (strain ATCC BAA-1280 / DSM 17508 / OCM 812 / Nankai-3).